The sequence spans 477 residues: 3-isopropylmalate dehydratase large subunit (477 aa).

[4Fe-4S] cluster contacts are provided by Cys352, Cys413, and Cys416.

It belongs to the aconitase/IPM isomerase family. LeuC type 1 subfamily. In terms of assembly, heterodimer of LeuC and LeuD. [4Fe-4S] cluster serves as cofactor.

The enzyme catalyses (2R,3S)-3-isopropylmalate = (2S)-2-isopropylmalate. It participates in amino-acid biosynthesis; L-leucine biosynthesis; L-leucine from 3-methyl-2-oxobutanoate: step 2/4. Functionally, catalyzes the isomerization between 2-isopropylmalate and 3-isopropylmalate, via the formation of 2-isopropylmaleate. The chain is 3-isopropylmalate dehydratase large subunit from Pseudomonas putida (strain ATCC 47054 / DSM 6125 / CFBP 8728 / NCIMB 11950 / KT2440).